An 864-amino-acid chain; its full sequence is Protein translocase subunit SecA (864 aa).

ATP contacts are provided by residues glutamine 87, 105-109, and aspartate 512; that span reads GEGKT.

The protein belongs to the SecA family. As to quaternary structure, monomer and homodimer. Part of the essential Sec protein translocation apparatus which comprises SecA, SecYEG and auxiliary proteins SecDF-YajC and YidC.

The protein localises to the cell inner membrane. The protein resides in the cytoplasm. It catalyses the reaction ATP + H2O + cellular proteinSide 1 = ADP + phosphate + cellular proteinSide 2.. Its function is as follows. Part of the Sec protein translocase complex. Interacts with the SecYEG preprotein conducting channel. Has a central role in coupling the hydrolysis of ATP to the transfer of proteins into and across the cell membrane, serving as an ATP-driven molecular motor driving the stepwise translocation of polypeptide chains across the membrane. This Buchnera aphidicola subsp. Cinara cedri (strain Cc) protein is Protein translocase subunit SecA.